An 86-amino-acid chain; its full sequence is MIFINIDITNSFMKEAVPLARQMEGDWIARMKIALNSVIINHYLNLPLTIENVNELLRKGVSYRRICKHYGIGRKDIEKLRQSSVV.

This is an uncharacterized protein from Bacillus subtilis (strain 168).